A 227-amino-acid chain; its full sequence is Cell wall mannoprotein CIS3 (227 aa).

The signal sequence occupies residues 1-21 (MQFKNVALAASVAALSATASA). A propeptide spanning residues 22-64 (EGYTPGEPWSTLTPTGSISCGAAEYTTTFGIAVQAITSSKAKR) is cleaved from the precursor. The stretch at 65-78 (DVISQIGDGQVQAT) is one PIR1/2/3 repeat. O-linked (Man) serine glycosylation occurs at serine 68. O-linked (Man) threonine glycosylation occurs at threonine 78. A compositionally biased stretch (low complexity) spans 83–124 (AQATDSQAQATTTATPTSSEKISSSASKTSTNATSSSCATPS). Residues 83–127 (AQATDSQAQATTTATPTSSEKISSSASKTSTNATSSSCATPSLKD) are disordered. Residues serine 105, serine 106, serine 107, and serine 109 are each glycosylated (O-linked (Man) serine). The O-linked (Man) threonine glycan is linked to threonine 111. A glycan (O-linked (Man) serine) is linked at serine 112. Threonine 113 carries an O-linked (Man) threonine glycan. The N-linked (GlcNAc...) asparagine glycan is linked to asparagine 114. Threonine 116 is a glycosylation site (O-linked (Man) threonine). Residues serine 117 and serine 118 are each glycosylated (O-linked (Man) serine).

The protein belongs to the PIR protein family. Covalently linked to beta-1,3-glucan of the inner cell wall layer via an alkali-sensitive ester linkage between the gamma-carboxyl group of glutamic acid, arising from Gln-74 within the PIR1/2/3 repeat, and hydroxyl groups of glucoses of beta-1,3-glucan chains. Post-translationally, extensively O-mannosylated. Also N-glycosylated.

It localises to the secreted. The protein resides in the cell wall. In terms of biological role, component of the outer cell wall layer. Required for stability of the cell wall and for optimal growth. Required for resistance against several antifungal and cell wall-perturbing agents. The chain is Cell wall mannoprotein CIS3 (CIS3) from Saccharomyces cerevisiae (strain ATCC 204508 / S288c) (Baker's yeast).